The primary structure comprises 280 residues: Foldase protein PrsA 4 (280 aa).

A signal peptide spans 1–21 (MKRKKLVIGSILMGMTLSLSA). Cys22 carries the N-palmitoyl cysteine lipid modification. The S-diacylglycerol cysteine moiety is linked to residue Cys22. Residues 132–222 (KPKLQVSHIL…FGYHIIKLTD (91 aa)) form the PpiC domain.

It belongs to the PrsA family.

The protein resides in the cell membrane. The enzyme catalyses [protein]-peptidylproline (omega=180) = [protein]-peptidylproline (omega=0). Functionally, plays a major role in protein secretion by helping the post-translocational extracellular folding of several secreted proteins. The sequence is that of Foldase protein PrsA 4 (prsA4) from Bacillus cereus (strain ATCC 14579 / DSM 31 / CCUG 7414 / JCM 2152 / NBRC 15305 / NCIMB 9373 / NCTC 2599 / NRRL B-3711).